Reading from the N-terminus, the 1318-residue chain is MAEAKSAPIFRNRVIDKKQLKKLIGWTFAHYGTAKTAVVADDLKALGFRYATRAGVSISIDDLKVPGSKAELLESAEKRIQETEDRYTRGEITEVERFQKVIDTWANTNDELTDRVVKNFRESDPLNSVYMMAFSGARGNISQVRQLVGMRGLMANPQGEIIDLPIKTNFREGLTVTEYIISSYGARKGLVDTALRTADSGYLTRRLVDVSQDVIIHEVDCGTSRGLFVEAMTDGDRILIPISQRLLGRVTAEAVLDPSTDEVLAEAGQDINEDLANRIEKAGIKKVKVRSPLTCEAARSVCQKCYGWSLAHAQMVDMGEAVGIIAAQSIGEPGTQLTMRTFHTGGVFTGETARLLRAPVAGTIKLGKKARTRPYRTRHGEEALLAEANFDLVLEGKGRKETFAILQGSTIFVQDGDKVAAEAILAEVPVSGRTKRTVEKATKDVATDLAGEIRFQDIVPEEKTDRQGNTTRIAQRGGLLWVLAGDVYNLLPGAEPTVKNGDRVEVGDVLAETKLTTERGGTVRMGEDNGSSTHREVEIITASVVLDTATVKAEASQGREHYVIETKGGQRFNLLAAPGTKVTTGHVVAELIDSRYRTQTGGLLKYSGVEISKKGRAKAKQGYEVTKGGTLLWIPEETHEVNKDISLLNVEDGQLVEAGTEVVKDIFCQTTGIVSVTQNNDILREIVIKPGDVHVLDDPDTAAKYDEGRLVNAGEEVFPGLTAEQLVWAEAVDGTDGPLLLLRPVQELVIPDEPPVPSQDSSQESSSRSIRLRAVQRLQFQDGERIKSVEGVDLLRTQLVLESEEGSSQLSADIELLPDSKDPETLRLQLVIIEPVVIRRDVASDTTHGSTHTELRVKDGQKVKPGAVIACTQIQCKEAGVVRGIQEGSEAVRRLLVERERDCVTLDLDVTAATQLQPGSLIVAGTQLVDGIIAPESGEVRAIAPGQLQLRIARPYRVSQGAVLHVEDKGLVQRGDNLVLLVFERAKTGDIIQGLPRIEELLEARKPKEACILARRPGVAHINYSDDDAIDIQVIEADGTQADYPVGPGQPLIISDGETVDAGQALTDGPANPHDLLEIYYDYFREQLGEDYEAALESLRRVQALLVNEVQSVYQSQGIDISDKHIEVIVRQMTSKVRIDDGGDTIMLPGELHELREVYNSNNTMALTGMAPAQFTPVLLGITKASLNTNSFISAASFQETTRVLTEAAIEGKSDWLRGLKENVIIGRLIPAGTGFKAYEESLLTDVDGGYEDRVYDDDLADVVIDDRAARSYTLNEGRDFSRSMTFAEGESMILDDGEELIDDSSASLRNLVDVDED.

Positions 221, 295, 302, and 305 each coordinate Zn(2+).

This sequence belongs to the RNA polymerase beta' chain family. RpoC2 subfamily. In cyanobacteria the RNAP catalytic core is composed of 2 alpha, 1 beta, 1 beta', 1 gamma and 1 omega subunit. When a sigma factor is associated with the core the holoenzyme is formed, which can initiate transcription. Requires Zn(2+) as cofactor.

The enzyme catalyses RNA(n) + a ribonucleoside 5'-triphosphate = RNA(n+1) + diphosphate. Its function is as follows. DNA-dependent RNA polymerase catalyzes the transcription of DNA into RNA using the four ribonucleoside triphosphates as substrates. In Synechococcus elongatus (strain ATCC 33912 / PCC 7942 / FACHB-805) (Anacystis nidulans R2), this protein is DNA-directed RNA polymerase subunit beta'.